The following is a 76-amino-acid chain: Attractin (76 aa).

The signal sequence occupies residues 1–18 (MKVAIIILSLALVAAVFA). 3 disulfide bridges follow: cysteine 22–cysteine 59, cysteine 31–cysteine 51, and cysteine 38–cysteine 44. N-linked (GlcNAc...) asparagine glycosylation occurs at asparagine 26.

In terms of assembly, binds to temptin and enticin. As to expression, produced by the albumen gland of the egg cordons.

The protein localises to the secreted. Water-borne pheromone that attract the marine mollusk Aplysia into breeding aggregations and coordinate male and female reproductive behavior within the aggregation. The protein is Attractin (ATT) of Aplysia californica (California sea hare).